A 58-amino-acid chain; its full sequence is Mastoparan-VT7 (58 aa).

The N-terminal stretch at 1–27 (MKNTILILFTAFIALLGFFGMSAEALA) is a signal peptide. AXPX repeat units follow at residues 27–30 (ADPK), 31–34 (ADPL), 35–38 (AGPN), and 41–44 (ADPE). Residues 28 to 45 (DPKADPLAGPNPDADPEA) constitute a propeptide that is removed on maturation.

Belongs to the MCD family. Mastoparan subfamily. In terms of tissue distribution, expressed by the venom gland.

The protein resides in the secreted. The synthetic peptide shows antimicrobial activities against Gram-negative bacteria (but not against all strains tested), Gram-positive bacteria (all strains tested) and the fungi C.albicans (but not C.parapsilosis). Exhibits little hemolytic activity against washed human erythrocytes. This Vespa tropica (Greater banded hornet) protein is Mastoparan-VT7.